Consider the following 579-residue polypeptide: UPF0329 protein ECU06_1620 (579 aa).

Disordered stretches follow at residues 325–360 (EEKAKGRKDGKKKSVNVSEVKEEESETEEVEAGEEA) and 370–389 (ARRKTGKKSRGGRKRYKIHK). The span at 329–338 (KGRKDGKKKS) shows a compositional bias: basic residues. The span at 345 to 360 (KEEESETEEVEAGEEA) shows a compositional bias: acidic residues.

It belongs to the UPF0329 family.

This chain is UPF0329 protein ECU06_1620, found in Encephalitozoon cuniculi (strain GB-M1) (Microsporidian parasite).